We begin with the raw amino-acid sequence, 423 residues long: Type II methyltransferase M.NgoBV (423 aa).

The SAM-dependent MTase C5-type domain maps to 4–423; that stretch reads IKFIDLFSGM…AVSERLLHTL (420 aa). Cysteine 80 is a catalytic residue.

Belongs to the class I-like SAM-binding methyltransferase superfamily. C5-methyltransferase family.

It carries out the reaction a 2'-deoxycytidine in DNA + S-adenosyl-L-methionine = a 5-methyl-2'-deoxycytidine in DNA + S-adenosyl-L-homocysteine + H(+). Functionally, a methylase, recognizes the double-stranded sequence 5'-GGNNCC-3', methylates C-5 on both strands, and protects the DNA from cleavage by the NgoBV endonuclease. The chain is Type II methyltransferase M.NgoBV (ngoBVM) from Neisseria gonorrhoeae.